The chain runs to 419 residues: Cell division protein FtsZ (419 aa).

GTP-binding positions include 22–26 (GGGGN), 109–111 (GSG), glutamate 140, arginine 144, and aspartate 188. The disordered stretch occupies residues 397-419 (ERFEAPISQDEDELDTPPFFKNR).

This sequence belongs to the FtsZ family. Homodimer. Polymerizes to form a dynamic ring structure in a strictly GTP-dependent manner. Interacts directly with several other division proteins. Interacts with CcrZ; the interaction is direct.

The protein localises to the cytoplasm. Essential cell division protein that forms a contractile ring structure (Z ring) at the future cell division site. The regulation of the ring assembly controls the timing and the location of cell division. One of the functions of the FtsZ ring is to recruit other cell division proteins to the septum to produce a new cell wall between the dividing cells. Binds GTP and shows GTPase activity. This is Cell division protein FtsZ from Streptococcus pneumoniae serotype 2 (strain D39 / NCTC 7466).